The chain runs to 249 residues: DNA polymerase sliding clamp (249 aa).

Belongs to the PCNA family. Homotrimer. The subunits circularize to form a toroid; DNA passes through its center. Replication factor C (RFC) is required to load the toroid on the DNA.

Its function is as follows. Sliding clamp subunit that acts as a moving platform for DNA processing. Responsible for tethering the catalytic subunit of DNA polymerase and other proteins to DNA during high-speed replication. This chain is DNA polymerase sliding clamp, found in Methanococcus vannielii (strain ATCC 35089 / DSM 1224 / JCM 13029 / OCM 148 / SB).